Here is a 372-residue protein sequence, read N- to C-terminus: UDP-N-acetylglucosamine--N-acetylmuramyl-(pentapeptide) pyrophosphoryl-undecaprenol N-acetylglucosamine transferase (372 aa).

UDP-N-acetyl-alpha-D-glucosamine is bound by residues 14–16, asparagine 128, arginine 169, serine 201, isoleucine 257, and glutamine 302; that span reads TGG.

The protein belongs to the glycosyltransferase 28 family. MurG subfamily.

The protein localises to the cell inner membrane. The catalysed reaction is di-trans,octa-cis-undecaprenyl diphospho-N-acetyl-alpha-D-muramoyl-L-alanyl-D-glutamyl-meso-2,6-diaminopimeloyl-D-alanyl-D-alanine + UDP-N-acetyl-alpha-D-glucosamine = di-trans,octa-cis-undecaprenyl diphospho-[N-acetyl-alpha-D-glucosaminyl-(1-&gt;4)]-N-acetyl-alpha-D-muramoyl-L-alanyl-D-glutamyl-meso-2,6-diaminopimeloyl-D-alanyl-D-alanine + UDP + H(+). Its pathway is cell wall biogenesis; peptidoglycan biosynthesis. Functionally, cell wall formation. Catalyzes the transfer of a GlcNAc subunit on undecaprenyl-pyrophosphoryl-MurNAc-pentapeptide (lipid intermediate I) to form undecaprenyl-pyrophosphoryl-MurNAc-(pentapeptide)GlcNAc (lipid intermediate II). This is UDP-N-acetylglucosamine--N-acetylmuramyl-(pentapeptide) pyrophosphoryl-undecaprenol N-acetylglucosamine transferase from Bacteroides thetaiotaomicron (strain ATCC 29148 / DSM 2079 / JCM 5827 / CCUG 10774 / NCTC 10582 / VPI-5482 / E50).